A 190-amino-acid polypeptide reads, in one-letter code: uncharacterized protein (190 aa).

Residues 1-55 lie on the Cytoplasmic side of the membrane; that stretch reads MSRLRRFNRKILSLSSDYTHDGESDQEDVSILPLDTEEQEELIQKFETNAHITNK. The helical transmembrane segment at 56–76 threads the bilayer; that stretch reads LYINLLSILYLLYGGLLMILV. Topologically, residues 77–80 are extracellular; that stretch reads RKSR. Residues 81–101 form a helical membrane-spanning segment; it reads GYIKLALLAGANSLICSCITL. Over 102–123 the chain is Cytoplasmic; sequence RYDIVNDYLLFKKFKLRVSNFS. The chain crosses the membrane as a helical span at residues 124 to 144; it reads INIINIILLVLMAWISFNHVV. Residues 145–149 are Extracellular-facing; the sequence is EDKKT. Residues 150 to 170 traverse the membrane as a helical segment; it reads VLCLQVPMFLFWVAVLVKRWA. The Cytoplasmic segment spans residues 171–190; sequence RNIEDEIADLRCLKYKYKNA.

The protein localises to the membrane. This is an uncharacterized protein from Saccharomyces cerevisiae (strain ATCC 204508 / S288c) (Baker's yeast).